The chain runs to 134 residues: Retinoid-binding protein 7 (134 aa).

The protein belongs to the calycin superfamily. Fatty-acid binding protein (FABP) family. Expressed primarily in kidney, heart and transverse colon. Detected in adult lymph node, appendix, ascending colon, and in fetal heart and spleen.

It is found in the cytoplasm. In terms of biological role, intracellular transport of retinol. In Homo sapiens (Human), this protein is Retinoid-binding protein 7 (RBP7).